The sequence spans 497 residues: Aldehyde dehydrogenase (497 aa).

242 to 247 lines the NAD(+) pocket; sequence GSTLVG. Glutamate 265 acts as the Proton acceptor in catalysis. Residue cysteine 299 is the Nucleophile of the active site.

It belongs to the aldehyde dehydrogenase family.

The enzyme catalyses an aldehyde + NAD(+) + H2O = a carboxylate + NADH + 2 H(+). Its pathway is alcohol metabolism; ethanol degradation; acetate from ethanol: step 2/2. The protein is Aldehyde dehydrogenase (aldA) of Aspergillus niger.